Reading from the N-terminus, the 602-residue chain is Alpha-(1-&gt;6)-mannopyranosyltransferase B (602 aa).

13 helical membrane-spanning segments follow: residues 105 to 125 (IGTMGALMIAFGALGAGALPV), 148 to 168 (MIVLIGVGFLVLAWVLMAPLV), 190 to 210 (TFGAWVAPIMLTAPLFTQDIY), 244 to 264 (VPFIWAQSPSPYGPVALSIAA), 274 to 294 (IVGGVLAHRIASLLGVVAAGW), 320 to 340 (LILHLIGGIHNESILLGFLLV), 368 to 388 (GVLISCAGLVKVTGFIGLGFV), 404 to 424 (VVAIGVAGLVQVAALVITVVV), 448 to 468 (WMSMTTNIGVISGFIGMNLGL), 472 to 492 (TAAMLVVTRAAGIAVAAAFMV), 503 to 523 (IHAVGGLGVATFVLVILFPVV), 546 to 566 (LGVIAYSTAFSFFVLPRGLAL), and 571 to 591 (VFSIYFGAALGFSILLLVGWW).

This sequence belongs to the MptA/B family.

Its subcellular location is the membrane. Its pathway is cell wall biogenesis; cell wall polysaccharide biosynthesis. Functionally, involved in the initiation of core alpha-(1-&gt;6) mannan biosynthesis of lipomannan (LM-A) and multi-mannosylated polymer (LM-B), extending triacylatedphosphatidyl-myo-inositol dimannoside (Ac1PIM2) and mannosylated glycolipid, 1,2-di-O-C16/C18:1-(alpha-D-mannopyranosyl)-(1-&gt;4)-(alpha-D-glucopyranosyluronic acid)-(1-&gt;3)-glycerol (Man1GlcAGroAc2), respectively. Catalyzes the addition of alpha-(1-&gt;6)-mannose residue. This is Alpha-(1-&gt;6)-mannopyranosyltransferase B (mptB) from Corynebacterium glutamicum (strain ATCC 13032 / DSM 20300 / JCM 1318 / BCRC 11384 / CCUG 27702 / LMG 3730 / NBRC 12168 / NCIMB 10025 / NRRL B-2784 / 534).